The primary structure comprises 443 residues: EGF-containing fibulin-like extracellular matrix protein 2 (443 aa).

Positions 1 to 23 (MLPCASCLPGSLLLWALLLLLLG) are cleaved as a signal peptide. The EGF-like 1; atypical domain maps to 36 to 81 (YTECTDGYEWDPDSQHCRDVNECLTIPEACKGEMKCINHYGGYLCL). Disulfide bonds link Cys58-Cys121, Cys65-Cys80, Cys71-Cys109, Cys127-Cys140, Cys134-Cys149, Cys151-Cys162, Cys168-Cys177, Cys173-Cys186, Cys188-Cys201, Cys207-Cys217, Cys213-Cys226, Cys228-Cys241, Cys247-Cys258, Cys254-Cys267, Cys269-Cys281, Cys287-Cys300, Cys294-Cys309, and Cys315-Cys327. The EGF-like 2; calcium-binding domain occupies 123–163 (DVDECAQALHDCRPSQDCHNLPGSYQCTCPDGYRKIGPECV). The EGF-like 3; calcium-binding domain occupies 164-202 (DIDECRYRYCQHRCVNLPGSFRCQCEPGFQLGPNNRSCV). N-linked (GlcNAc...) asparagine glycosylation occurs at Asn198. Positions 203–242 (DVNECDMGAPCEQRCFNSYGTFLCRCHQGYELHRDGFSCS) constitute an EGF-like 4; calcium-binding domain. In terms of domain architecture, EGF-like 5; calcium-binding spans 243–282 (DIDECSYSSYLCQYRCINEPGRFSCHCPQGYQLLATRLCQ). One can recognise an EGF-like 6; calcium-binding domain in the interval 283–328 (DIDECESGAHQCSEAQTCVNFHGGYRCVDTNRCVEPYIQVSENRCL). Asn394 carries N-linked (GlcNAc...) asparagine glycosylation.

Belongs to the fibulin family. As to quaternary structure, homodimer; disulfide-linked. Multimer; allows heparin binding. Monomer. Interacts with FBN1 (via N-terminal domain); this interaction inhibits EFEMP2 binding to LOX and ELN. Interacts with LOX (via propeptide); this interaction is strong and facilitates formation of ternary complexes with ELN during elastic fiber assembly; this interaction limits interaction of EFEMP2 with FBLN5. Interacts with PITX2. Interacts with ELN with moderate affinity; this interaction regulates ELN self-assembly maturation stage. Interacts with FBLN5 with moderate affinity. Interacts with LOXL1 (via propeptide), LTBP1 and TGFB1 stronger than with LOXL2 and LTBP3. Interacts with PCOLCE. Interacts with collagen type IV trimer (COL4A1-COL4A1-COL4A2), NID2 and moderately with COL15A1-derived endostatin. Interacts with EMILIN1; this interaction promotes the incorporation of EFEMP2 into the extracellular matrix. Interacts with LTBP4; the LTBP4 long form (LTBP4L) has a stronger binding affinity than the LTBP4 short form and the LTBP4 long form promotes fibrillar deposition of EFEMP2. Post-translationally, N-glycosylated; contains mostly complex-type glycans. Not O-glycosylated. In terms of processing, cleaved by ELANE; produces a 50-55 kDa fragment. Cleaved by MMP2 and MMP9; produces several fragments.

It localises to the secreted. The protein resides in the extracellular space. The protein localises to the extracellular matrix. It is found in the basement membrane. Its function is as follows. Plays a crucial role in elastic fiber formation in tissue, and in the formation of ultrastructural connections between elastic laminae and smooth muscle cells in the aorta, therefore participates in terminal differentiation and maturation of smooth muscle cell (SMC) and in the mechanical properties and wall integrity maintenance of the aorta. In addition, is involved in the control of collagen fibril assembly in tissue throught proteolytic activation of LOX leading to cross- linking of collagen and elastin. Also promotes ELN coacervation and participates in the deposition of ELN coacervates on to microfibrils but also regulates ELN cross- linking through LOX interaction. Moreover adheres to the cells through heparin binding in a calcium-dependent manner and regulates vascularlar smooth muscle cells proliferation through angiotensin signaling. In Homo sapiens (Human), this protein is EGF-containing fibulin-like extracellular matrix protein 2.